Here is a 254-residue protein sequence, read N- to C-terminus: Receptor expression-enhancing protein 3 (254 aa).

3 helical membrane passes run 1-21 (MVSW…YPAY), 35-55 (YVRW…ETVA), and 59-79 (LAWF…LLSP). The segment at 162-232 (DEPVGHRPYQ…QSMKSVKTIK (71 aa)) is disordered. Residues 198 to 212 (EQTDEEAEGPFSDDE) show a composition bias toward acidic residues. Residue T200 is modified to Phosphothreonine. S209 carries the post-translational modification Phosphoserine.

Belongs to the DP1 family.

The protein localises to the endoplasmic reticulum membrane. In terms of biological role, microtubule-binding protein required to ensure proper cell division and nuclear envelope reassembly by sequestering the endoplasmic reticulum away from chromosomes during mitosis. Probably acts by clearing the endoplasmic reticulum membrane from metaphase chromosomes. In Mus musculus (Mouse), this protein is Receptor expression-enhancing protein 3 (Reep3).